Here is an 86-residue protein sequence, read N- to C-terminus: Small ribosomal subunit protein bS18c (86 aa).

It belongs to the bacterial ribosomal protein bS18 family. In terms of assembly, part of the 30S ribosomal subunit.

It localises to the plastid. It is found in the chloroplast. This is Small ribosomal subunit protein bS18c from Larix laricina (Tamarack).